The sequence spans 95 residues: MPKQEKMMLVLLILPLPYCNAAGVTTVQWGGHGDGLDRYLQRGVRDVHRPCQSVRPGRVWGKCCLTRLCSTMCCARADCTCVYHTWRGHGCSCVM.

The N-terminal stretch at 1–21 is a signal peptide; it reads MPKQEKMMLVLLILPLPYCNA. The propeptide occupies 22-45; that stretch reads AGVTTVQWGGHGDGLDRYLQRGVR. 4 disulfides stabilise this stretch: Cys-64-Cys-73, Cys-69-Cys-81, Cys-74-Cys-91, and Cys-79-Cys-93.

It belongs to the conotoxin D superfamily. As to quaternary structure, homodimer. Pseudo-homodimer (identical sequence, different post-translational modifications). As to expression, expressed by the venom duct.

Its subcellular location is the secreted. In terms of biological role, alpha-D-conopeptides act as non-competitive inhibitors of nicotinic acetylcholine receptors (nAChR). Through its two C-terminal domains, this homodimeric protein would bind to two nAChR allosteric sites, located outside the nAChR C-loop of the principal binding face and at the adjacent binding interface in a clockwise direction. This toxin has strong inhibitory activity on rat alpha-9-alpha-10 (CHRNA9-CHRNA10) (IC(50)=1.2 nM) and a moderate inhibitory activity on human alpha-7 (CHRNA7) (IC(50)=210 nM), rat alpha-3-beta-2 (CHRNA3-CHRNB2) (IC(50)=498 nM), rat alpha-3-beta-4 (CHRNA3-CHRNB4) (IC(50)=614 nM) and rat alpha-1-beta-1-delta-epsilon (CHRNA1-CHRNB1-CHRNE-CHRND) (IC(50)=743 nM) subtypes. Shows a weaker inhibitory activity on human alpha-9-alpha-10 (IC(50)=28 nM) than on the rat channel. This is explained by a different residue in the probable binding site (His-31 in rat alpha-10 and Leu-31 in human). The protein is Alpha-conotoxin GeXXA of Conus generalis (General cone).